Here is a 272-residue protein sequence, read N- to C-terminus: Outer surface protein A (272 aa).

Positions M1–A16 are cleaved as a signal peptide. Residue C17 is the site of N-palmitoyl cysteine attachment. Residue C17 is the site of S-diacylglycerol cysteine attachment.

This sequence belongs to the OspA lipoprotein family.

It is found in the cell outer membrane. It localises to the cell surface. This Borreliella burgdorferi (Lyme disease spirochete) protein is Outer surface protein A.